Here is a 244-residue protein sequence, read N- to C-terminus: MELTIFILRLAIYILTFPLYLLNFLGLWSWICKKWFPYFLVRFTVIYNEQMASKKRELFSNLQEFAGPSGKLSLLEVGCGTGANFKFYPPGCRVTCIDPNPNFEKFLIKSIAENRHLQFERFVVAAGENMHQVADGSVDVVVCTLVLCSVKNQERILREVCRVLRPGGAFYFMEHVAAECSTWNYFWQQVLDPAWHLLFDGCNLTRESWKALERASFSKLKLQHIQAPLSWELVRPHIYGYAVK.

Positions 1-28 (MELTIFILRLAIYILTFPLYLLNFLGLW) are targeting to lipid droplets. A signal peptide spans 1–29 (MELTIFILRLAIYILTFPLYLLNFLGLWS).

This sequence belongs to the methyltransferase superfamily. (Microbial infection) Interacts with HCV non-structural protein 4B/NS4B (via C-terminal region); this interaction may promote the recruitment of NS4B in the proximity of lipid droplet. As to quaternary structure, self-associates. Interacts with SNRNP200; this interaction may promote the odontogenic differentiation. In terms of processing, methylated at lysine residues most likely by EZH2. Expressed in the liver.

The protein resides in the lipid droplet. It is found in the endoplasmic reticulum. The protein localises to the membrane. Its subcellular location is the microsome. It localises to the cytoplasm. The protein resides in the cytosol. The catalysed reaction is a thiol + S-adenosyl-L-methionine = a methyl thioether + S-adenosyl-L-homocysteine + H(+). It catalyses the reaction an adenosine in mRNA + S-adenosyl-L-methionine = an N(6)-methyladenosine in mRNA + S-adenosyl-L-homocysteine + H(+). With respect to regulation, inhibited by 2,3-dichloro-alpha-methylbenzylamine (DCMB). Its function is as follows. Thiol S-methyltransferase that catalyzes the transfer of a methyl group from S-adenosyl-L-methionine to alkyl and phenolic thiol-containing acceptor substrates. Together with TMT1B accounts for most of S-thiol methylation activity in the endoplasmic reticulum of hepatocytes. Able to methylate the N6 position of adenosine residues in long non-coding RNAs (lncRNAs). May facilitate lncRNAs transfer into exosomes at the tumor-stroma interface. Promotes osteogenic and odontogenic differentiation by regulating the expression of genes involved in stem cell differentiation and survival. Targeted from the endoplasmic reticulum to lipid droplets, where it recruits cellular proteins to form functional organelles. Functionally, (Microbial infection) May be involved in the assembly and release stages of hepatitis C virus (HCV) life cycle and thus play a crucial role in HCV propagation. This Homo sapiens (Human) protein is Thiol S-methyltransferase TMT1A.